A 507-amino-acid polypeptide reads, in one-letter code: Trigger factor (507 aa).

In terms of domain architecture, PPIase FKBP-type spans 162 to 243 (GDFVSLDLSA…VRGVKEKELP (82 aa)). Residues 434–507 (NLPRRPSGEA…DSELPASETK (74 aa)) form a disordered region. A compositionally biased stretch (acidic residues) spans 442 to 460 (EAEDDVRDISDELDAEELE). Low complexity predominate over residues 461-488 (VPAAAPSAEVTAAAGDEATATATATDAD).

The protein belongs to the FKBP-type PPIase family. Tig subfamily.

It localises to the cytoplasm. The catalysed reaction is [protein]-peptidylproline (omega=180) = [protein]-peptidylproline (omega=0). Involved in protein export. Acts as a chaperone by maintaining the newly synthesized protein in an open conformation. Functions as a peptidyl-prolyl cis-trans isomerase. This is Trigger factor from Parafrankia sp. (strain EAN1pec).